We begin with the raw amino-acid sequence, 558 residues long: Adenine deaminase (558 aa).

It belongs to the metallo-dependent hydrolases superfamily. Adenine deaminase family. Requires Mn(2+) as cofactor.

The enzyme catalyses adenine + H2O + H(+) = hypoxanthine + NH4(+). This chain is Adenine deaminase, found in Deinococcus deserti (strain DSM 17065 / CIP 109153 / LMG 22923 / VCD115).